The following is a 258-amino-acid chain: Trifolitoxin-processing protein TfxF (258 aa).

Its function is as follows. The actions of the proteins TfxB, TfxD and TfxF are implicated in the processing of the inactive trifolitoxin (TfxA) precursor into the active peptide. This Rhizobium leguminosarum bv. trifolii protein is Trifolitoxin-processing protein TfxF (tfxF).